Here is a 591-residue protein sequence, read N- to C-terminus: 4-coumarate--CoA ligase-like 3 (591 aa).

ATP is bound by residues serine 228, serine 229, glycine 230, threonine 231, serine 232, and lysine 236. Position 280 (tyrosine 280) interacts with (E)-4-coumaroyl-AMP. A CoA-binding site is contributed by arginine 301. An SBD1 region spans residues 303-375 (DAGDAVAAIG…QAFPHVDFIQ (73 aa)). Residues alanine 353, glutamine 375, glycine 376, and threonine 380 each coordinate (E)-4-coumaroyl-AMP. 5 residues coordinate ATP: glutamine 375, glycine 376, threonine 380, aspartate 459, and arginine 474. The interval 376-440 (GYGMTESTAV…LHGPGIMKGY (65 aa)) is SBD2. (E)-4-coumaroyl-AMP is bound by residues lysine 476 and lysine 480. CoA contacts are provided by lysine 482 and glycine 483. Position 565 (lysine 565) interacts with ATP.

It belongs to the ATP-dependent AMP-binding enzyme family. It depends on Mg(2+) as a cofactor.

The catalysed reaction is (E)-4-coumarate + ATP + CoA = (E)-4-coumaroyl-CoA + AMP + diphosphate. The enzyme catalyses (E)-4-coumarate + ATP + H(+) = (E)-4-coumaroyl-AMP + diphosphate. It catalyses the reaction (E)-4-coumaroyl-AMP + CoA = (E)-4-coumaroyl-CoA + AMP + H(+). Carboxylate--CoA ligase that may use 4-coumarate as substrate. Follows a two-step reaction mechanism, wherein the carboxylate substrate first undergoes adenylation by ATP, followed by a thioesterification in the presence of CoA to yield the final CoA thioester. This Oryza sativa subsp. japonica (Rice) protein is 4-coumarate--CoA ligase-like 3 (4CLL3).